We begin with the raw amino-acid sequence, 342 residues long: Paired box protein Pax-9 (342 aa).

A DNA-binding region (paired) is located at residues 4–130 (AFGEVNQLGG…SSISRILRNK (127 aa)). The tract at residues 7–63 (EVNQLGGVFVNGRPLPNAIRLRIVELAQLGIRPCDISRQLRVSHGCVSKILARYNET) is PAI subdomain. An RED subdomain region spans residues 82-130 (TVVKHIRTYKQRDPGIFAWEIRDRLLADGVCDKYNVPSVSSISRILRNK). The interaction with KDM5B stretch occupies residues 168-189 (AAAAKVPTPPGVPAIPGSVALP).

As to quaternary structure, interacts with KDM5B.

It localises to the nucleus. In terms of biological role, transcription factor required for normal development of thymus, parathyroid glands, ultimobranchial bodies, teeth, skeletal elements of skull and larynx as well as distal limbs. The sequence is that of Paired box protein Pax-9 from Rattus norvegicus (Rat).